The following is a 417-amino-acid chain: Serine hydroxymethyltransferase (417 aa).

Residues leucine 120 and 124–126 (GHL) each bind (6S)-5,6,7,8-tetrahydrofolate. N6-(pyridoxal phosphate)lysine is present on lysine 229. 354-356 (SPF) lines the (6S)-5,6,7,8-tetrahydrofolate pocket.

It belongs to the SHMT family. As to quaternary structure, homodimer. The cofactor is pyridoxal 5'-phosphate.

It localises to the cytoplasm. The enzyme catalyses (6R)-5,10-methylene-5,6,7,8-tetrahydrofolate + glycine + H2O = (6S)-5,6,7,8-tetrahydrofolate + L-serine. It functions in the pathway one-carbon metabolism; tetrahydrofolate interconversion. It participates in amino-acid biosynthesis; glycine biosynthesis; glycine from L-serine: step 1/1. Its function is as follows. Catalyzes the reversible interconversion of serine and glycine with tetrahydrofolate (THF) serving as the one-carbon carrier. This reaction serves as the major source of one-carbon groups required for the biosynthesis of purines, thymidylate, methionine, and other important biomolecules. Also exhibits THF-independent aldolase activity toward beta-hydroxyamino acids, producing glycine and aldehydes, via a retro-aldol mechanism. This chain is Serine hydroxymethyltransferase, found in Acinetobacter baumannii (strain AB307-0294).